Consider the following 443-residue polypeptide: MSPVHYRTSTSTIVAVLKLYRFLDDRDALFRQIGRSVDFDPEVQRAVTDILEAVRLRGDMAVLEYTERFQGAVLTSMQVPEEDILRAREEADPAFIRVLEEAWENILRFHRHEVENSFFYEGEGGVVLGQRVTPMDRAMLYVPGGKASYPSSVLMNAAPARVAGVGEIFMTTPCDASGAVSPHILAAASVAGVTSVYRLGGAQAVAAFAYGTQTIPKVDIITGPGNKYVALAKKQVFGHVAIDSIAGPSEVVVVADDDADAEFITMDLFAQAEHDPDASSVLITPSMRLAEEVRDLAAARVGSMLRGEVIAEALSNNGAIVVVADIEEACRVSDMIAPEHLELHVLHPWELLASIRHAGAVFMGGYSCETVGDYYAGPNHTLPTNGTARFFSPLSVRDFVKHTSIISYTRRQIMACGERIASFADHEGLEAHAEAVRARLKKG.

Positions 141, 203, and 226 each coordinate NAD(+). Residues serine 249, glutamine 271, and histidine 274 each contribute to the substrate site. Zn(2+) contacts are provided by glutamine 271 and histidine 274. Catalysis depends on proton acceptor residues glutamate 339 and histidine 340. Residues histidine 340, aspartate 373, glutamate 427, and histidine 432 each contribute to the substrate site. Aspartate 373 lines the Zn(2+) pocket. Histidine 432 is a binding site for Zn(2+).

The protein belongs to the histidinol dehydrogenase family. It depends on Zn(2+) as a cofactor.

It catalyses the reaction L-histidinol + 2 NAD(+) + H2O = L-histidine + 2 NADH + 3 H(+). The protein operates within amino-acid biosynthesis; L-histidine biosynthesis; L-histidine from 5-phospho-alpha-D-ribose 1-diphosphate: step 9/9. Its function is as follows. Catalyzes the sequential NAD-dependent oxidations of L-histidinol to L-histidinaldehyde and then to L-histidine. In Chlorobium luteolum (strain DSM 273 / BCRC 81028 / 2530) (Pelodictyon luteolum), this protein is Histidinol dehydrogenase.